The sequence spans 362 residues: Outer mitochondrial transmembrane helix translocase (362 aa).

Residues 1–19 (MVLKEIPTENITRPLGRNE) are Mitochondrial intermembrane-facing. The chain crosses the membrane as a helical span at residues 20-42 (VIGLLFRLTIFGAVTYFTIKWMV). The Cytoplasmic segment spans residues 43–362 (DAIDPTRKQK…HEAFMQVPLD (320 aa)). 137 to 144 (GPPGCGKT) contacts ATP.

The protein belongs to the AAA ATPase family. MSP1 subfamily.

It is found in the mitochondrion outer membrane. The protein localises to the peroxisome membrane. Its subcellular location is the postsynaptic cell membrane. The enzyme catalyses [protein]-with a C-terminal TM segment(out) + ATP + H2O = [protein]-with a C-terminal TM segment(in) + ADP + phosphate + H(+). Outer mitochondrial translocase required to remove mislocalized tail-anchored transmembrane proteins on mitochondria. Specifically recognizes and binds tail-anchored transmembrane proteins: acts as a dislocase that mediates the ATP-dependent extraction of mistargeted tail-anchored transmembrane proteins from the mitochondrion outer membrane. Also plays a critical role in regulating the surface expression of AMPA receptors (AMPAR), thereby regulating synaptic plasticity and learning and memory. This chain is Outer mitochondrial transmembrane helix translocase, found in Danio rerio (Zebrafish).